The following is a 512-amino-acid chain: ATP synthase subunit alpha 2 (512 aa).

An ATP-binding site is contributed by 169–176 (GDRQTGKT).

This sequence belongs to the ATPase alpha/beta chains family. In terms of assembly, F-type ATPases have 2 components, CF(1) - the catalytic core - and CF(0) - the membrane proton channel. CF(1) has five subunits: alpha(3), beta(3), gamma(1), delta(1), epsilon(1). CF(0) has four main subunits: a(1), b(1), b'(1) and c(9-12).

The protein resides in the cell inner membrane. It catalyses the reaction ATP + H2O + 4 H(+)(in) = ADP + phosphate + 5 H(+)(out). Produces ATP from ADP in the presence of a proton gradient across the membrane. The alpha chain is a regulatory subunit. This Dinoroseobacter shibae (strain DSM 16493 / NCIMB 14021 / DFL 12) protein is ATP synthase subunit alpha 2.